The primary structure comprises 158 residues: Transcription elongation factor GreA (158 aa).

The stretch at 3–75 (TEKTYPMTQE…TQLENMIRNA (73 aa)) forms a coiled coil.

It belongs to the GreA/GreB family.

Functionally, necessary for efficient RNA polymerase transcription elongation past template-encoded arresting sites. The arresting sites in DNA have the property of trapping a certain fraction of elongating RNA polymerases that pass through, resulting in locked ternary complexes. Cleavage of the nascent transcript by cleavage factors such as GreA or GreB allows the resumption of elongation from the new 3'terminus. GreA releases sequences of 2 to 3 nucleotides. This chain is Transcription elongation factor GreA, found in Bacillus cytotoxicus (strain DSM 22905 / CIP 110041 / 391-98 / NVH 391-98).